We begin with the raw amino-acid sequence, 341 residues long: Phosphate acyltransferase (341 aa).

This sequence belongs to the PlsX family. Homodimer. Probably interacts with PlsY.

The protein localises to the cytoplasm. It carries out the reaction a fatty acyl-[ACP] + phosphate = an acyl phosphate + holo-[ACP]. Its pathway is lipid metabolism; phospholipid metabolism. Functionally, catalyzes the reversible formation of acyl-phosphate (acyl-PO(4)) from acyl-[acyl-carrier-protein] (acyl-ACP). This enzyme utilizes acyl-ACP as fatty acyl donor, but not acyl-CoA. The sequence is that of Phosphate acyltransferase from Vibrio atlanticus (strain LGP32) (Vibrio splendidus (strain Mel32)).